A 1897-amino-acid chain; its full sequence is 1,3-beta-glucan synthase component FKS1 (1897 aa).

The disordered stretch occupies residues 1 to 106 (MSGYPAGHYE…SETFSDFTMR (106 aa)). The span at 8–29 (HYEDGYGHQEHGGDAYYQDEHG) shows a compositional bias: basic and acidic residues. The segment covering 74–83 (GDQYYDQGNG) has biased composition (low complexity). A run of 17 helical transmembrane segments spans residues 487-507 (IWVI…PTLY), 525-545 (WSAV…ATLC), 564-584 (LMFL…VFGF), 591-611 (TICL…FFFF), 655-675 (LWIC…TLSL), 707-727 (ILLG…SYLW), 728-748 (YVIC…VSIW), 1329-1349 (NMFI…LGAL), 1386-1406 (CVVS…VQEL), 1473-1493 (FAGP…FATS), 1497-1517 (TPAL…PFLF), 1588-1608 (IFFS…VPYL), 1630-1650 (IAIV…MFFG), 1666-1686 (FGAV…LVIF), 1701-1721 (VLGM…IISL), 1766-1786 (FSAD…ALCI), and 1826-1846 (FAIL…APLV).

Belongs to the glycosyltransferase 48 family. Component of the 1,3-beta-glucan synthase (GS) complex composed of a catalytic subunit fksA and a regulatory subunit.

Its subcellular location is the mitochondrion. The protein localises to the cell membrane. It carries out the reaction [(1-&gt;3)-beta-D-glucosyl](n) + UDP-alpha-D-glucose = [(1-&gt;3)-beta-D-glucosyl](n+1) + UDP + H(+). Its function is as follows. Catalytic subunit of the 1,3-beta-glucan synthase. Synthesizes 1,3-beta-glucan, a major structural component of the fungal cell wall. Involved in cell wall synthesis, maintenance and remodeling. The polypeptide is 1,3-beta-glucan synthase component FKS1 (Aspergillus niger (strain ATCC MYA-4892 / CBS 513.88 / FGSC A1513)).